Here is a 766-residue protein sequence, read N- to C-terminus: EMILIN-3 (766 aa).

A signal peptide spans 1–22 (MGRRRLLVWLCAVAALLSGAQA). The 77-residue stretch at 55–131 (HKALCAYVVH…PGFTGKRCPE (77 aa)) folds into the EMI domain. Disulfide bonds link C59–C121, C86–C92, and C120–C129. N-linked (GlcNAc...) asparagine glycosylation is present at N66. Positions 132–179 (HLTDHGAASPQLEPEPQIPSGQLDPGPRPPSYSRAAPSPHGRKGPGLF) are disordered. N443 carries an N-linked (GlcNAc...) asparagine glycan. A coiled-coil region spans residues 467 to 491 (GTMLEERVQSLEERLATLAGELSHD). 3 N-linked (GlcNAc...) asparagine glycosylation sites follow: N562, N616, and N732. 2 coiled-coil regions span residues 615–663 (ANTS…QLKA) and 726–761 (SHVD…EQVR).

Its subcellular location is the secreted. The protein resides in the extracellular space. The protein localises to the extracellular matrix. This chain is EMILIN-3 (EMILIN3), found in Homo sapiens (Human).